The primary structure comprises 267 residues: Glutamate racemase (267 aa).

Substrate-binding positions include 9–10 (DS) and 41–42 (YG). Cysteine 72 acts as the Proton donor/acceptor in catalysis. 73-74 (NT) is a binding site for substrate. Catalysis depends on cysteine 184, which acts as the Proton donor/acceptor. A substrate-binding site is contributed by 185 to 186 (TH).

The protein belongs to the aspartate/glutamate racemases family.

It catalyses the reaction L-glutamate = D-glutamate. The protein operates within cell wall biogenesis; peptidoglycan biosynthesis. Provides the (R)-glutamate required for cell wall biosynthesis. The chain is Glutamate racemase from Staphylococcus epidermidis (strain ATCC 12228 / FDA PCI 1200).